The primary structure comprises 83 residues: Cytochrome b559 subunit alpha (83 aa).

Residues 21-35 form a helical membrane-spanning segment; the sequence is VIHSITVPSLFIAGW. Heme is bound at residue H23.

It belongs to the PsbE/PsbF family. As to quaternary structure, heterodimer of an alpha subunit and a beta subunit. PSII is composed of 1 copy each of membrane proteins PsbA, PsbB, PsbC, PsbD, PsbE, PsbF, PsbH, PsbI, PsbJ, PsbK, PsbL, PsbM, PsbT, PsbX, PsbY, PsbZ, Psb30/Ycf12, at least 3 peripheral proteins of the oxygen-evolving complex and a large number of cofactors. It forms dimeric complexes. Heme b serves as cofactor.

The protein resides in the plastid. The protein localises to the chloroplast thylakoid membrane. Functionally, this b-type cytochrome is tightly associated with the reaction center of photosystem II (PSII). PSII is a light-driven water:plastoquinone oxidoreductase that uses light energy to abstract electrons from H(2)O, generating O(2) and a proton gradient subsequently used for ATP formation. It consists of a core antenna complex that captures photons, and an electron transfer chain that converts photonic excitation into a charge separation. The protein is Cytochrome b559 subunit alpha of Oltmannsiellopsis viridis (Marine flagellate).